The sequence spans 764 residues: 5-methyltetrahydropteroyltriglutamate--homocysteine methyltransferase (764 aa).

5-methyltetrahydropteroyltri-L-glutamate contacts are provided by residues 16–19 (RELK) and Lys-115. L-homocysteine is bound by residues 435 to 437 (IGS) and Glu-488. L-methionine-binding positions include 435–437 (IGS) and Glu-488. 5-methyltetrahydropteroyltri-L-glutamate contacts are provided by residues 519-520 (RC) and Trp-565. Residue Asp-603 participates in L-homocysteine binding. Asp-603 serves as a coordination point for L-methionine. Glu-609 provides a ligand contact to 5-methyltetrahydropteroyltri-L-glutamate. Residues His-645, Cys-647, and Glu-669 each contribute to the Zn(2+) site. The active-site Proton donor is the His-698. Zn(2+) is bound at residue Cys-730.

The protein belongs to the vitamin-B12 independent methionine synthase family. The cofactor is Zn(2+).

The enzyme catalyses 5-methyltetrahydropteroyltri-L-glutamate + L-homocysteine = tetrahydropteroyltri-L-glutamate + L-methionine. It participates in amino-acid biosynthesis; L-methionine biosynthesis via de novo pathway; L-methionine from L-homocysteine (MetE route): step 1/1. In terms of biological role, catalyzes the transfer of a methyl group from 5-methyltetrahydrofolate to homocysteine resulting in methionine formation. The chain is 5-methyltetrahydropteroyltriglutamate--homocysteine methyltransferase from Burkholderia thailandensis (strain ATCC 700388 / DSM 13276 / CCUG 48851 / CIP 106301 / E264).